Consider the following 292-residue polypeptide: Tyrosine isonitrile desaturase (292 aa).

Fe cation contacts are provided by histidine 110, aspartate 112, and histidine 259.

Belongs to the TfdA dioxygenase family. Requires Fe(2+) as cofactor.

The enzyme catalyses (2S)-3-(4-hydroxyphenyl)-2-isocyanopropanoate + 2-oxoglutarate + O2 = (2E)-3-(4-hydroxyphenyl)-2-isocyanoprop-2-enoate + succinate + CO2 + H2O. Functionally, catalyzes the 2-oxoglutarate-dependent oxidation of tyrosine isonitrile. The protein is Tyrosine isonitrile desaturase of Erwinia amylovora (strain CFBP1430).